The primary structure comprises 253 residues: Ethylene-responsive transcription factor RAP2-11 (253 aa).

The segment at residues lysine 21–alanine 78 is a DNA-binding region (AP2/ERF).

The protein belongs to the AP2/ERF transcription factor family. ERF subfamily.

It is found in the nucleus. In terms of biological role, probably acts as a transcriptional activator. Binds to the GCC-box pathogenesis-related promoter element. May be involved in the regulation of gene expression by stress factors and by components of stress signal transduction pathways. The sequence is that of Ethylene-responsive transcription factor RAP2-11 (RAP2-11) from Arabidopsis thaliana (Mouse-ear cress).